The chain runs to 453 residues: 3-phosphoshikimate 1-carboxyvinyltransferase (453 aa).

Positions 1 to 25 (MSHDSEPQPVTAHPAGPLTGALKPP) are disordered. Positions 28, 29, and 33 each coordinate 3-phosphoshikimate. Residue K28 coordinates phosphoenolpyruvate. Phosphoenolpyruvate is bound by residues G101 and R129. S175, Q177, D330, and K357 together coordinate 3-phosphoshikimate. Q177 serves as a coordination point for phosphoenolpyruvate. D330 (proton acceptor) is an active-site residue. Phosphoenolpyruvate contacts are provided by R361 and R405.

This sequence belongs to the EPSP synthase family. In terms of assembly, monomer.

It localises to the cytoplasm. It carries out the reaction 3-phosphoshikimate + phosphoenolpyruvate = 5-O-(1-carboxyvinyl)-3-phosphoshikimate + phosphate. It functions in the pathway metabolic intermediate biosynthesis; chorismate biosynthesis; chorismate from D-erythrose 4-phosphate and phosphoenolpyruvate: step 6/7. In terms of biological role, catalyzes the transfer of the enolpyruvyl moiety of phosphoenolpyruvate (PEP) to the 5-hydroxyl of shikimate-3-phosphate (S3P) to produce enolpyruvyl shikimate-3-phosphate and inorganic phosphate. The polypeptide is 3-phosphoshikimate 1-carboxyvinyltransferase (Methylorubrum populi (strain ATCC BAA-705 / NCIMB 13946 / BJ001) (Methylobacterium populi)).